Reading from the N-terminus, the 170-residue chain is F1 capsule antigen (170 aa).

The N-terminal stretch at 1 to 21 is a signal peptide; that stretch reads MKKISSVIAIALFGTIATANA. The tract at residues 100 to 150 is contains potential antigenic determinants that may stimulate T-cells; the sequence is GNNHQFTTKVIGKDSRDFDISPKVNGENLVGDDVVLATGSQDFFVRSIGSK.

The protein localises to the secreted. It is found in the capsule. This Yersinia pestis protein is F1 capsule antigen (caf1).